Here is a 355-residue protein sequence, read N- to C-terminus: Uroporphyrinogen decarboxylase (355 aa).

Residues 36–40, aspartate 85, tyrosine 160, serine 215, and histidine 334 contribute to the substrate site; that span reads RQAGR.

Belongs to the uroporphyrinogen decarboxylase family. Homodimer.

It localises to the cytoplasm. It carries out the reaction uroporphyrinogen III + 4 H(+) = coproporphyrinogen III + 4 CO2. It participates in porphyrin-containing compound metabolism; protoporphyrin-IX biosynthesis; coproporphyrinogen-III from 5-aminolevulinate: step 4/4. Its function is as follows. Catalyzes the decarboxylation of four acetate groups of uroporphyrinogen-III to yield coproporphyrinogen-III. In Rhodococcus jostii (strain RHA1), this protein is Uroporphyrinogen decarboxylase.